The primary structure comprises 1690 residues: Restin homolog (1690 aa).

2 stretches are compositionally biased toward polar residues: residues 1–11 (MSDDTSASGGT) and 39–51 (NIPT…TGIP). The disordered stretch occupies residues 1–105 (MSDDTSASGG…ESDDNLSSIN (105 aa)). Phosphoserine occurs at positions 64 and 67. The 43-residue stretch at 143-185 (GDTHFAAGEWAGVVLDEPNGKNDGCVSGKRYFQCEPKRGIFSR) folds into the CAP-Gly 1 domain. The tract at residues 195–227 (AGAQTPTSPLAKSSPDRSRTVSPTASIRSSMLR) is disordered. The span at 214–226 (TVSPTASIRSSML) shows a compositional bias: polar residues. Phosphoserine is present on S216. The region spanning 260 to 302 (GETQFAPGNWCGVELDEPSGKNDGTVDDIRYFECKPKYGVFVP) is the CAP-Gly 2 domain. 3 positions are modified to phosphoserine: S309, S322, and S325. T327 is modified (phosphothreonine). S328 is modified (phosphoserine). Position 362 is a phosphothreonine (T362). 7 coiled-coil regions span residues 378 to 468 (QHVE…VSAT), 484 to 660 (GALQ…DMLR), 667 to 916 (EEKS…TKLK), 926 to 981 (LSSC…ELQA), 1001 to 1121 (ATGH…EAIQ), 1158 to 1549 (EADM…AQMN), and 1565 to 1600 (DIET…LETL). The interval 843-905 (QQAAASGEEG…GSLEEEAKKS (63 aa)) is disordered. Polar residues predominate over residues 865-885 (QLKSQAEETQSELKSTQSNLE). Disordered stretches follow at residues 1031-1052 (QLQD…KEKS) and 1400-1419 (KLDE…NEIQ). 2 stretches are compositionally biased toward basic and acidic residues: residues 1040–1052 (TKLK…KEKS) and 1410–1419 (SQKKSHNEIQ). Residues 1635 to 1665 (TEDCPIQGSEDQDYSTPSSESNNNEKERKLP) form a disordered region. T1681 is modified (phosphothreonine). S1682 is subject to Phosphoserine.

In terms of assembly, interacts with Lva. Specifically expressed at the tip of the furrow in cellularizing blastoderms. CLIP-190 and jar are coexpressed at several times in development and in a number of tissues, including embryonic axonal neuron processes and posterior pole.

Its subcellular location is the cytoplasm. The protein localises to the cytoskeleton. It is found in the golgi apparatus. The protein resides in the microtubule organizing center. It localises to the perinuclear region. In terms of biological role, together CLIP-190 and jar may coordinate the interaction between the actin and microtubule cytoskeleton. May link endocytic vesicles to microtubules. May play a role in formation of furrows during cellularization. The polypeptide is Restin homolog (CLIP-190) (Drosophila melanogaster (Fruit fly)).